The sequence spans 82 residues: Cytochrome c-551 (82 aa).

4 residues coordinate heme c: Cys-12, Cys-15, His-16, and Met-61.

Post-translationally, binds 1 heme c group covalently per subunit.

This Azotobacter vinelandii protein is Cytochrome c-551.